The primary structure comprises 570 residues: Nucleoprotein (570 aa).

Residues 54 to 236 are binding site for the cap structure m7GTP; it reads LRKTKRTDDD…ITKEESSINI (183 aa). The disordered stretch occupies residues 332-356; that stretch reads DLTKKPDAVPEPGAAPRPAERKGQN. Positions 386 and 388 each coordinate Mg(2+). Mn(2+) contacts are provided by Asp-386 and Glu-388. Glu-396, Cys-503, His-506, and Cys-531 together coordinate Zn(2+). Position 535 (Asp-535) interacts with Mg(2+). Asp-535 is a Mn(2+) binding site.

It belongs to the arenaviridae nucleocapsid protein family. In terms of assembly, homomultimerizes to form the nucleocapsid. Binds to viral genomic RNA. Interacts with glycoprotein G2. Interacts with protein Z; this interaction probably directs the encapsidated genome to budding sites. Interacts with protein L; this interaction does not interfere with Z-L interaction. Interacts with host IKBKE (via Protein kinase domain); the interaction inhibits IKBKE kinase activity.

It localises to the virion. The protein localises to the host cytoplasm. Encapsidates the genome, protecting it from nucleases. The encapsidated genomic RNA is termed the nucleocapsid (NC). Serves as template for viral transcription and replication. The increased presence of protein N in host cell does not seem to trigger the switch from transcription to replication as observed in other negative strain RNA viruses. Through the interaction with host IKBKE, strongly inhibits the phosphorylation and nuclear translocation of host IRF3, a protein involved in interferon activation pathway, leading to the inhibition of interferon-beta and IRF3-dependent promoters activation. Also encodes a functional 3'-5' exoribonuclease that degrades preferentially dsRNA substrates and thereby participates in the suppression of interferon induction. This chain is Nucleoprotein, found in Artibeus (neotropical fruit bats).